The following is a 192-amino-acid chain: Imidazoleglycerol-phosphate dehydratase (192 aa).

The protein belongs to the imidazoleglycerol-phosphate dehydratase family.

The protein localises to the cytoplasm. It catalyses the reaction D-erythro-1-(imidazol-4-yl)glycerol 3-phosphate = 3-(imidazol-4-yl)-2-oxopropyl phosphate + H2O. It participates in amino-acid biosynthesis; L-histidine biosynthesis; L-histidine from 5-phospho-alpha-D-ribose 1-diphosphate: step 6/9. This is Imidazoleglycerol-phosphate dehydratase from Staphylococcus aureus (strain JH9).